Consider the following 574-residue polypeptide: Serine/threonine-protein kinase B (574 aa).

The region spanning 34–301 (YQTLGLLGKG…VLDALEMPTY (268 aa)) is the Protein kinase domain. ATP is bound by residues 40–48 (LGKGGFGAT) and lysine 65. The Proton acceptor role is filled by aspartate 163. A disordered region spans residues 319–407 (GAGDEPATGI…GGSVGAGGID (89 aa)). Polar residues predominate over residues 343-364 (TRFNTNVQPRDPSSTSLNTGIK). Pentapeptide repeat domains lie at 454–493 (QNLVGIVLAKAFVPGINCYQANLTNANFEQAELTRADFGK) and 504–543 (ANLSDAYFGYADLRGADLRGANLNGVNFKYANLQGANFSG).

The protein belongs to the protein kinase superfamily. Ser/Thr protein kinase family. In terms of processing, autophosphorylated.

The catalysed reaction is L-seryl-[protein] + ATP = O-phospho-L-seryl-[protein] + ADP + H(+). It carries out the reaction L-threonyl-[protein] + ATP = O-phospho-L-threonyl-[protein] + ADP + H(+). Protein kinase required for cell motility, but not for phototaxis. The polypeptide is Serine/threonine-protein kinase B (spkB) (Synechocystis sp. (strain ATCC 27184 / PCC 6803 / Kazusa)).